Here is a 389-residue protein sequence, read N- to C-terminus: Gustatory receptor 68a (389 aa).

Topologically, residues M1–R42 are cytoplasmic. A helical membrane pass occupies residues L43–S63. At K64–T82 the chain is on the extracellular side. N80 is a glycosylation site (N-linked (GlcNAc...) asparagine). Residues I83–A103 form a helical membrane-spanning segment. At S104–N133 the chain is on the cytoplasmic side. Residues L134 to H154 traverse the membrane as a helical segment. The Extracellular segment spans residues Y155–Q164. The chain crosses the membrane as a helical span at residues I165–L185. Residues R186–N236 lie on the Cytoplasmic side of the membrane. Residues I237–T257 form a helical membrane-spanning segment. N-linked (GlcNAc...) asparagine glycosylation occurs at N258. Residues N258–T281 are Extracellular-facing. Residues I282–A302 traverse the membrane as a helical segment. Over C303–S352 the chain is Cytoplasmic. Residues I353–I373 form a helical membrane-spanning segment. Over Q374 to A389 the chain is Extracellular.

Belongs to the insect chemoreceptor superfamily. Gustatory receptor (GR) family. Gr21a subfamily. Expressed in chemosensory neurons of about 20 male-specific gustatory bristles in the forelegs. No expression is seen in the mechanosensory neurons. In larvae, expressed in the ventral pharyngeal sense organ.

The protein localises to the cell membrane. Its function is as follows. Dsx-dependent essential component of pheromone-driven courtship behavior. Recognizes a female pheromone involved in the second step (tapping step) of the courtship display which is essential for efficient execution of the entire courtship sequence and timely mating. Required for detection of the male sex pheromone CH503 which is transferred from males to females during mating and inhibits courtship behavior by other males. Gr68a-expressing neurons in the male foreleg relay signals to the suboesophageal zone (SEZ) and courtship suppression is mediated by the release of the neuropeptide tachykinin from a cluster of 8-10 neurons in the SEZ. The polypeptide is Gustatory receptor 68a (Gr68a) (Drosophila melanogaster (Fruit fly)).